A 161-amino-acid polypeptide reads, in one-letter code: Effector CFEM5 (161 aa).

The signal sequence occupies residues 1–23 (MFSLTKSVLFTSIVAIAAQATTA). The CFEM domain occupies 24 to 126 (VSSPTQTSLP…KVLDAVVASA (103 aa)). 3 disulfides stabilise this stretch: cysteine 46–cysteine 78, cysteine 56–cysteine 63, and cysteine 65–cysteine 100. Residue aspartate 60 coordinates heme.

This sequence belongs to the RBT5 family. In terms of assembly, interacts with Z.mays LRR5; the interaction is direct. Interacts with Z.mays WAK17 isoform 2; the interaction is direct.

The protein localises to the membrane. Its subcellular location is the secreted. Its function is as follows. Suppresses host programmed cell death during infection by binding to Z.mays WAK17 isoform 2 and Z.mays LRR5, to prevent activation of Z.mays WAK17 isoform 1 and the downstream hypersensitive response. The polypeptide is Effector CFEM5 (Gibberella zeae (strain ATCC MYA-4620 / CBS 123657 / FGSC 9075 / NRRL 31084 / PH-1) (Wheat head blight fungus)).